A 413-amino-acid polypeptide reads, in one-letter code: Serine hydroxymethyltransferase (413 aa).

Residues Leu119 and 123–125 (GHL) contribute to the (6S)-5,6,7,8-tetrahydrofolate site. N6-(pyridoxal phosphate)lysine is present on Lys228. Residue 351-353 (SPF) participates in (6S)-5,6,7,8-tetrahydrofolate binding.

It belongs to the SHMT family. Homodimer. The cofactor is pyridoxal 5'-phosphate.

It is found in the cytoplasm. It catalyses the reaction (6R)-5,10-methylene-5,6,7,8-tetrahydrofolate + glycine + H2O = (6S)-5,6,7,8-tetrahydrofolate + L-serine. It participates in one-carbon metabolism; tetrahydrofolate interconversion. It functions in the pathway amino-acid biosynthesis; glycine biosynthesis; glycine from L-serine: step 1/1. Its function is as follows. Catalyzes the reversible interconversion of serine and glycine with tetrahydrofolate (THF) serving as the one-carbon carrier. This reaction serves as the major source of one-carbon groups required for the biosynthesis of purines, thymidylate, methionine, and other important biomolecules. Also exhibits THF-independent aldolase activity toward beta-hydroxyamino acids, producing glycine and aldehydes, via a retro-aldol mechanism. The protein is Serine hydroxymethyltransferase of Clostridium botulinum (strain Okra / Type B1).